We begin with the raw amino-acid sequence, 946 residues long: Translation initiation factor IF-2 (946 aa).

Disordered regions lie at residues 58-250 (AERK…AVVI) and 301-324 (VSRD…KSLS). Low complexity-rich tracts occupy residues 102–165 (EPPQ…QPAA) and 174–185 (AQPSAPQPAAAQ). The segment covering 186 to 211 (PRPPQPPMPSRPPPAGYRPAPPPGAR) has biased composition (pro residues). Residues 212-229 (PPMSAAPGAPAQPGAAAQ) show a composition bias toward low complexity. The region spanning 445 to 614 (IRPPVVTVMG…ALQSEVLELK (170 aa)) is the tr-type G domain. The G1 stretch occupies residues 454–461 (GHVDHGKT). 454–461 (GHVDHGKT) is a GTP binding site. A G2 region spans residues 479-483 (GITQH). The G3 stretch occupies residues 500 to 503 (DTPG). Residues 500–504 (DTPGH) and 554–557 (NKVD) contribute to the GTP site. The G4 stretch occupies residues 554 to 557 (NKVD). Residues 590-592 (SAR) form a G5 region.

It belongs to the TRAFAC class translation factor GTPase superfamily. Classic translation factor GTPase family. IF-2 subfamily.

Its subcellular location is the cytoplasm. One of the essential components for the initiation of protein synthesis. Protects formylmethionyl-tRNA from spontaneous hydrolysis and promotes its binding to the 30S ribosomal subunits. Also involved in the hydrolysis of GTP during the formation of the 70S ribosomal complex. This Anaeromyxobacter sp. (strain K) protein is Translation initiation factor IF-2.